Consider the following 355-residue polypeptide: Peptide chain release factor 1 (355 aa).

Residue Gln231 is modified to N5-methylglutamine. Residues 280–291 (SERLAKESEARK) are compositionally biased toward basic and acidic residues. The tract at residues 280–303 (SERLAKESEARKSQVGSGDRSERI) is disordered.

This sequence belongs to the prokaryotic/mitochondrial release factor family. Post-translationally, methylated by PrmC. Methylation increases the termination efficiency of RF1.

The protein resides in the cytoplasm. Peptide chain release factor 1 directs the termination of translation in response to the peptide chain termination codons UAG and UAA. The chain is Peptide chain release factor 1 from Campylobacter jejuni subsp. jejuni serotype O:2 (strain ATCC 700819 / NCTC 11168).